We begin with the raw amino-acid sequence, 784 residues long: Replication protein A 70 kDa DNA-binding subunit E (784 aa).

The tract at residues 114–224 (HPVPGGKHND…NRGPVARNEA (111 aa)) is disordered. Composition is skewed to polar residues over residues 132-148 (KFNT…QVNN) and 167-190 (SSVP…NGVT). Positions 241-327 (WTIKARVTNK…RNDYEIMLDN (87 aa)) form a DNA-binding region, OB. The segment at 532 to 558 (CPIMNGDRPCSKKVTDNGDGTWRCEKC) adopts a C4-type zinc-finger fold. Disordered stretches follow at residues 678 to 707 (LPIN…PSSV) and 746 to 784 (AKCP…VGSY). Residues 695-707 (GIGSSGTRDPSSV) are compositionally biased toward polar residues. Positions 760-776 (YMGGSYRGTTGSYGGGL) are enriched in gly residues.

It belongs to the replication factor A protein 1 family. Heterotrimer of RPA1, RPA2 and RPA3 (canonical replication protein A complex).

It is found in the nucleus. Its function is as follows. Component of the replication protein A complex (RPA) required for DNA recombination, repair and replication. The activity of RPA is mediated by single-stranded DNA binding and protein interactions. Probably involved in repair of double-strand DNA breaks (DSBs) induced by genotoxic stresses. This chain is Replication protein A 70 kDa DNA-binding subunit E (RPA1E), found in Arabidopsis thaliana (Mouse-ear cress).